The primary structure comprises 191 residues: Peptidyl-tRNA hydrolase (191 aa).

Residue tyrosine 14 coordinates tRNA. Catalysis depends on histidine 19, which acts as the Proton acceptor. TRNA is bound by residues tyrosine 64, asparagine 66, and asparagine 112.

The protein belongs to the PTH family. As to quaternary structure, monomer.

It localises to the cytoplasm. It catalyses the reaction an N-acyl-L-alpha-aminoacyl-tRNA + H2O = an N-acyl-L-amino acid + a tRNA + H(+). In terms of biological role, hydrolyzes ribosome-free peptidyl-tRNAs (with 1 or more amino acids incorporated), which drop off the ribosome during protein synthesis, or as a result of ribosome stalling. Its function is as follows. Catalyzes the release of premature peptidyl moieties from peptidyl-tRNA molecules trapped in stalled 50S ribosomal subunits, and thus maintains levels of free tRNAs and 50S ribosomes. In Clostridium beijerinckii (strain ATCC 51743 / NCIMB 8052) (Clostridium acetobutylicum), this protein is Peptidyl-tRNA hydrolase.